Consider the following 131-residue polypeptide: Small ribosomal subunit protein uS8 (131 aa).

The protein belongs to the universal ribosomal protein uS8 family. As to quaternary structure, part of the 30S ribosomal subunit. Contacts proteins S5 and S12.

Its function is as follows. One of the primary rRNA binding proteins, it binds directly to 16S rRNA central domain where it helps coordinate assembly of the platform of the 30S subunit. This is Small ribosomal subunit protein uS8 from Halorhodospira halophila (strain DSM 244 / SL1) (Ectothiorhodospira halophila (strain DSM 244 / SL1)).